Here is a 305-residue protein sequence, read N- to C-terminus: Acetaldehyde dehydrogenase (305 aa).

NAD(+) is bound at residue 13-16 (SGNI). Catalysis depends on C128, which acts as the Acyl-thioester intermediate. NAD(+) is bound by residues 159 to 167 (SAGPGTRQN) and N278.

Belongs to the acetaldehyde dehydrogenase family.

It catalyses the reaction acetaldehyde + NAD(+) + CoA = acetyl-CoA + NADH + H(+). The protein is Acetaldehyde dehydrogenase of Roseiflexus sp. (strain RS-1).